A 181-amino-acid chain; its full sequence is Endoribonuclease YbeY (181 aa).

3 residues coordinate Zn(2+): H115, H119, and H125.

Belongs to the endoribonuclease YbeY family. The cofactor is Zn(2+).

Its subcellular location is the cytoplasm. Its function is as follows. Single strand-specific metallo-endoribonuclease involved in late-stage 70S ribosome quality control and in maturation of the 3' terminus of the 16S rRNA. The protein is Endoribonuclease YbeY of Bifidobacterium adolescentis (strain ATCC 15703 / DSM 20083 / NCTC 11814 / E194a).